Reading from the N-terminus, the 388-residue chain is 3-amino-5-hydroxybenzoate synthase (388 aa).

Lys188 bears the N6-(pyridoxal phosphate)lysine mark.

Belongs to the degT/dnrJ/eryC1 family. In terms of assembly, homodimer. Can interact with RifL. Pyridoxal 5'-phosphate is required as a cofactor.

It carries out the reaction 5-deoxy-5-amino-3-dehydroshikimate = 3-amino-5-hydroxybenzoate + H2O + H(+). The enzyme catalyses UDP-3-oxo-alpha-D-glucose + L-glutamine = UDP-alpha-D-kanosamine + 2-oxoglutaramate. It functions in the pathway antibiotic biosynthesis; rifamycin B biosynthesis. Its activity is regulated as follows. AHBA synthase activity is activated by 3-deoxy-D-arabinoheptulosonic acid 7-phosphate (DAHP), an intermediate in the shikimate pathway, and is irreversibly inhibited by gabaculine (5-amino-1,3-cyclohexadiene-1-carboxylate). Its function is as follows. Catalyzes the dehydration and aromatization of 5-amino-5-deoxy-3-dehydroshikimate (aminoDHS) to 3-amino-5-hydroxybenzoate (AHBA), a compound that then serves as the starter unit for the assembly of a polyketide during the biosynthesis of rifamycin B and other ansamycin antibiotics. Cannot utilize 5-deoxy-5-amino-3-dehydroquinate (aminoDHQ), 5-deoxy-5-aminoshikimate (aminoSA), quinate, 3-dehydroquinate, or 3-dehydroshikimate (DHS) as substrate. In terms of biological role, in a complex with RifL, RifK may have a second function in the AHBA pathway, acting as a transaminase introducing the nitrogen into the first pathway intermediate, UDP-3-keto-D-glucose, to give UDP-kanosamine. Appears to use glutamine as the nitrogen donor; NH(4)(+) or asparagine are 30% less effective as nitrogen donors and neither glutamate nor aspartate show activity. This is 3-amino-5-hydroxybenzoate synthase (rifK) from Amycolatopsis mediterranei (strain S699) (Nocardia mediterranei).